The primary structure comprises 297 residues: Phosphatidylserine decarboxylase proenzyme (297 aa).

Active-site charge relay system; for autoendoproteolytic cleavage activity residues include D90, H147, and S252. Catalysis depends on S252, which acts as the Schiff-base intermediate with substrate; via pyruvic acid; for decarboxylase activity. Position 252 is a pyruvic acid (Ser); by autocatalysis (S252).

Belongs to the phosphatidylserine decarboxylase family. PSD-B subfamily. Prokaryotic type I sub-subfamily. In terms of assembly, heterodimer of a large membrane-associated beta subunit and a small pyruvoyl-containing alpha subunit. Requires pyruvate as cofactor. Post-translationally, is synthesized initially as an inactive proenzyme. Formation of the active enzyme involves a self-maturation process in which the active site pyruvoyl group is generated from an internal serine residue via an autocatalytic post-translational modification. Two non-identical subunits are generated from the proenzyme in this reaction, and the pyruvate is formed at the N-terminus of the alpha chain, which is derived from the carboxyl end of the proenzyme. The autoendoproteolytic cleavage occurs by a canonical serine protease mechanism, in which the side chain hydroxyl group of the serine supplies its oxygen atom to form the C-terminus of the beta chain, while the remainder of the serine residue undergoes an oxidative deamination to produce ammonia and the pyruvoyl prosthetic group on the alpha chain. During this reaction, the Ser that is part of the protease active site of the proenzyme becomes the pyruvoyl prosthetic group, which constitutes an essential element of the active site of the mature decarboxylase.

It is found in the cell membrane. The catalysed reaction is a 1,2-diacyl-sn-glycero-3-phospho-L-serine + H(+) = a 1,2-diacyl-sn-glycero-3-phosphoethanolamine + CO2. It participates in phospholipid metabolism; phosphatidylethanolamine biosynthesis; phosphatidylethanolamine from CDP-diacylglycerol: step 2/2. Catalyzes the formation of phosphatidylethanolamine (PtdEtn) from phosphatidylserine (PtdSer). The chain is Phosphatidylserine decarboxylase proenzyme from Stutzerimonas stutzeri (strain A1501) (Pseudomonas stutzeri).